The primary structure comprises 162 residues: Caveolin-2 (162 aa).

The Cytoplasmic segment spans residues 1 to 86 (MGLETEKADV…FEISKYVVYK (86 aa)). At Tyr19 the chain carries Phosphotyrosine; by SRC. Phosphoserine occurs at positions 20 and 23. Position 27 is a phosphotyrosine; by SRC (Tyr27). Ser36 is modified (phosphoserine). Residues 87–107 (FLTVFLAIPLAFAAGILFATL) constitute an intramembrane region (helical). Over 108-162 (SCLHIWIIMPFVKTCLMVLPSVQTVWKTVTDVVIAPLCASVGRSFSSVSLQLSHD) the chain is Cytoplasmic.

This sequence belongs to the caveolin family. As to quaternary structure, monomer or homodimer. Interacts with CAV1; the interaction forms a stable heterooligomeric complex that is required for targeting to lipid rafts and for caveolae formation. Tyrosine phosphorylated forms do not form heterooligomers with the Tyr-19-phosphorylated form existing as a monomer or dimer, and the Tyr-27-form as a monomer only. Interacts (tyrosine phosphorylated form) with the SH2 domain-containing proteins, RASA1, NCK1 and SRC. Interacts (tyrosine phosphorylated form) with INSR, the interaction (Tyr-27-phosphorylated form) is increased on insulin stimulation. Interacts (Tyr-19 phosphorylated form) with MAPK1 (phosphorylated form); the interaction, promoted by insulin, leads to nuclear location and MAPK1 activation. Interacts with STAT3; the interaction is increased on insulin-induced tyrosine phosphorylation leading to STAT activation. In terms of processing, phosphorylated on serine and tyrosine residues. CAV1 promotes phosphorylation on Ser-23 which then targets the complex to the plasma membrane, lipid rafts and caveolae. Phosphorylation on Ser-36 appears to modulate mitosis in endothelial cells. Phosphorylation on both Tyr-19 and Tyr-27 is required for insulin-induced 'Ser-727' phosphorylation of STAT3 and its activation. Phosphorylation on Tyr-19 is required for insulin-induced phosphorylation of MAPK1 and DNA binding of STAT3. Tyrosine phosphorylation is induced by both EGF and insulin (By. similarity).

It localises to the nucleus. It is found in the cytoplasm. The protein localises to the golgi apparatus membrane. Its subcellular location is the cell membrane. The protein resides in the membrane. It localises to the caveola. Functionally, may act as a scaffolding protein within caveolar membranes. Interacts directly with G-protein alpha subunits and can functionally regulate their activity. Acts as an accessory protein in conjunction with CAV1 in targeting to lipid rafts and driving caveolae formation. The Ser-36 phosphorylated form has a role in modulating mitosis in endothelial cells. Positive regulator of cellular mitogenesis of the MAPK signaling pathway. Required for the insulin-stimulated nuclear translocation and activation of MAPK1 and STAT3, and the subsequent regulation of cell cycle progression. This chain is Caveolin-2 (CAV2), found in Loxodonta africana (African elephant).